Here is a 146-residue protein sequence, read N- to C-terminus: Large ribosomal subunit protein uL13 (146 aa).

This sequence belongs to the universal ribosomal protein uL13 family. As to quaternary structure, part of the 50S ribosomal subunit.

Its function is as follows. This protein is one of the early assembly proteins of the 50S ribosomal subunit, although it is not seen to bind rRNA by itself. It is important during the early stages of 50S assembly. This is Large ribosomal subunit protein uL13 from Bdellovibrio bacteriovorus (strain ATCC 15356 / DSM 50701 / NCIMB 9529 / HD100).